The chain runs to 327 residues: Chlorophenol reductase (327 aa).

Positions 1 to 24 are cleaved as a signal peptide; that stretch reads MKKTLGIILSISLAFSVLALPIFA. In terms of domain architecture, LysM spans 65 to 110; sequence TYYTVVSGDFFWQIAAKHGLTIDALAKLNPQIKNVNLIFPGQKILV.

Cob(I)alamin is required as a cofactor.

The protein resides in the secreted. Its subcellular location is the cell wall. It localises to the cell membrane. Its activity is regulated as follows. Inhibited by sulfide and to a lesser extent by nitrite. In terms of biological role, reductive dechlorination of ortho-chlorophenols. Dechlorinates in the ortho position with respect to the hydroxyl group. This is Chlorophenol reductase from Desulfitobacterium hafniense (Desulfitobacterium frappieri).